The following is an 80-amino-acid chain: Cytochrome c oxidase subunit 7B, mitochondrial (80 aa).

The N-terminal 24 residues, methionine 1–glutamine 24, are a transit peptide targeting the mitochondrion. The Mitochondrial matrix portion of the chain corresponds to isoleucine 25 to aspartate 32. The helical transmembrane segment at phenylalanine 33–glutamine 59 threads the bilayer. Residues isoleucine 60–glutamine 80 lie on the Mitochondrial intermembrane side of the membrane.

The protein belongs to the cytochrome c oxidase VIIb family. As to quaternary structure, component of the cytochrome c oxidase (complex IV, CIV), a multisubunit enzyme composed of 14 subunits. The complex is composed of a catalytic core of 3 subunits MT-CO1, MT-CO2 and MT-CO3, encoded in the mitochondrial DNA, and 11 supernumerary subunits COX4I1 (or COX4I2), COX5A, COX5B, COX6A2 (or COX6A1), COX6B1 (or COX6B2), COX6C, COX7A1 (or COX7A2), COX7B, COX7C, COX8B and NDUFA4, which are encoded in the nuclear genome. The complex exists as a monomer or a dimer and forms supercomplexes (SCs) in the inner mitochondrial membrane with NADH-ubiquinone oxidoreductase (complex I, CI) and ubiquinol-cytochrome c oxidoreductase (cytochrome b-c1 complex, complex III, CIII), resulting in different assemblies (supercomplex SCI(1)III(2)IV(1) and megacomplex MCI(2)III(2)IV(2)).

It localises to the mitochondrion inner membrane. It participates in energy metabolism; oxidative phosphorylation. In terms of biological role, component of the cytochrome c oxidase, the last enzyme in the mitochondrial electron transport chain which drives oxidative phosphorylation. The respiratory chain contains 3 multisubunit complexes succinate dehydrogenase (complex II, CII), ubiquinol-cytochrome c oxidoreductase (cytochrome b-c1 complex, complex III, CIII) and cytochrome c oxidase (complex IV, CIV), that cooperate to transfer electrons derived from NADH and succinate to molecular oxygen, creating an electrochemical gradient over the inner membrane that drives transmembrane transport and the ATP synthase. Cytochrome c oxidase is the component of the respiratory chain that catalyzes the reduction of oxygen to water. Electrons originating from reduced cytochrome c in the intermembrane space (IMS) are transferred via the dinuclear copper A center (CU(A)) of subunit 2 and heme A of subunit 1 to the active site in subunit 1, a binuclear center (BNC) formed by heme A3 and copper B (CU(B)). The BNC reduces molecular oxygen to 2 water molecules using 4 electrons from cytochrome c in the IMS and 4 protons from the mitochondrial matrix. Plays a role in proper central nervous system (CNS) development in vertebrates. The protein is Cytochrome c oxidase subunit 7B, mitochondrial (COX7B) of Bos taurus (Bovine).